A 249-amino-acid chain; its full sequence is uncharacterized protein (249 aa).

The S4 RNA-binding domain maps to V4 to P71. The active-site Nucleophile is the D106.

This sequence belongs to the pseudouridine synthase RsuA family.

The enzyme catalyses a uridine in RNA = a pseudouridine in RNA. This is an uncharacterized protein from Aquifex aeolicus (strain VF5).